A 151-amino-acid chain; its full sequence is Large ribosomal subunit protein uL15 (151 aa).

Residues 37–57 are disordered; that stretch reads GMRGQKSRSGRPTRPGFEGGQ.

Belongs to the universal ribosomal protein uL15 family. Part of the 50S ribosomal subunit.

Its function is as follows. Binds to the 23S rRNA. In Prochlorococcus marinus (strain MIT 9313), this protein is Large ribosomal subunit protein uL15.